Reading from the N-terminus, the 71-residue chain is Large ribosomal subunit protein bL31 (71 aa).

Zn(2+)-binding residues include Cys16, Cys18, Cys37, and Cys40.

This sequence belongs to the bacterial ribosomal protein bL31 family. Type A subfamily. In terms of assembly, part of the 50S ribosomal subunit. Requires Zn(2+) as cofactor.

Functionally, binds the 23S rRNA. The chain is Large ribosomal subunit protein bL31 from Sodalis glossinidius (strain morsitans).